A 76-amino-acid polypeptide reads, in one-letter code: Omega-conotoxin-like TxMKLT1-0141 (76 aa).

The first 22 residues, 1–22 (MKLTCMMIVAVLFLTAWTFATA), serve as a signal peptide directing secretion. A propeptide spanning residues 23–50 (DDSSNGLENLFPKAHHEMKNPEASKLNE) is cleaved from the precursor. 3 cysteine pairs are disulfide-bonded: Cys52-Cys67, Cys59-Cys70, and Cys66-Cys75.

This sequence belongs to the conotoxin O1 superfamily. As to expression, expressed by the venom duct.

The protein resides in the secreted. Omega-conotoxins act at presynaptic membranes, they bind and block voltage-gated calcium channels (Cav). This Conus textile (Cloth-of-gold cone) protein is Omega-conotoxin-like TxMKLT1-0141.